Consider the following 301-residue polypeptide: HPr kinase/phosphorylase (301 aa).

Active-site residues include histidine 134 and lysine 155. 149–156 (GKSGLGKS) contacts ATP. Serine 156 is a binding site for Mg(2+). The active-site Proton acceptor; for phosphorylation activity. Proton donor; for dephosphorylation activity is aspartate 173. The interval 196-205 (LEVRGLGIIN) is important for the catalytic mechanism of both phosphorylation and dephosphorylation. Glutamate 197 contributes to the Mg(2+) binding site. Residue arginine 239 is part of the active site. The tract at residues 260 to 265 (PITPGK) is important for the catalytic mechanism of dephosphorylation.

This sequence belongs to the HPrK/P family. In terms of assembly, homohexamer. The cofactor is Mg(2+).

It catalyses the reaction [HPr protein]-L-serine + ATP = [HPr protein]-O-phospho-L-serine + ADP + H(+). The catalysed reaction is [HPr protein]-O-phospho-L-serine + phosphate + H(+) = [HPr protein]-L-serine + diphosphate. Catalyzes the ATP- as well as the pyrophosphate-dependent phosphorylation of a specific serine residue in HPr, a phosphocarrier protein of the phosphoenolpyruvate-dependent sugar phosphotransferase system (PTS). HprK/P also catalyzes the pyrophosphate-producing, inorganic phosphate-dependent dephosphorylation (phosphorolysis) of seryl-phosphorylated HPr (P-Ser-HPr). The two antagonistic activities of HprK/P are regulated by several intracellular metabolites, which change their concentration in response to the absence or presence of rapidly metabolisable carbon sources (glucose, fructose, etc.) in the growth medium. Therefore, by controlling the phosphorylation state of HPr, HPrK/P is a sensor enzyme that plays a major role in the regulation of carbon metabolism and sugar transport: it mediates carbon catabolite repression (CCR), and regulates PTS-catalyzed carbohydrate uptake and inducer exclusion. This Malacoplasma penetrans (strain HF-2) (Mycoplasma penetrans) protein is HPr kinase/phosphorylase.